The primary structure comprises 266 residues: Zinc transporter ZupT (266 aa).

The next 8 membrane-spanning stretches (helical) occupy residues 8–28 (LLLT…ALAV), 36–56 (LALS…MEII), 71–91 (AGAW…WAID), 123–143 (GIFT…AVFF), 152–172 (GIVI…AVAV), 185–205 (FSLS…GYTL), 209–229 (FLTP…MVYI), and 246–266 (LAIT…LLLT). Residues asparagine 134 and glutamate 137 each contribute to the Fe(2+) site. Residues glutamate 137 and histidine 162 each coordinate Zn(2+). Positions 163, 166, and 195 each coordinate Fe(2+). Glutamate 166 contributes to the Zn(2+) binding site.

It belongs to the ZIP transporter (TC 2.A.5) family. ZupT subfamily.

Its subcellular location is the cell inner membrane. It carries out the reaction Zn(2+)(in) = Zn(2+)(out). Functionally, mediates zinc uptake. May also transport other divalent cations. The sequence is that of Zinc transporter ZupT from Chlorobium luteolum (strain DSM 273 / BCRC 81028 / 2530) (Pelodictyon luteolum).